The sequence spans 210 residues: Orotate phosphoribosyltransferase (210 aa).

K26 is a 5-phospho-alpha-D-ribose 1-diphosphate binding site. Residue 34 to 35 (FF) participates in orotate binding. 5-phospho-alpha-D-ribose 1-diphosphate is bound by residues 72 to 73 (YK), R98, K99, K102, H104, and 123 to 131 (DDVITAGTA). Residues T127 and R155 each coordinate orotate.

This sequence belongs to the purine/pyrimidine phosphoribosyltransferase family. PyrE subfamily. In terms of assembly, homodimer. Mg(2+) is required as a cofactor.

The enzyme catalyses orotidine 5'-phosphate + diphosphate = orotate + 5-phospho-alpha-D-ribose 1-diphosphate. The protein operates within pyrimidine metabolism; UMP biosynthesis via de novo pathway; UMP from orotate: step 1/2. Its function is as follows. Catalyzes the transfer of a ribosyl phosphate group from 5-phosphoribose 1-diphosphate to orotate, leading to the formation of orotidine monophosphate (OMP). This is Orotate phosphoribosyltransferase from Legionella pneumophila (strain Paris).